The following is a 435-amino-acid chain: Xylose isomerase (435 aa).

Active-site residues include H99 and D102. Mg(2+) contacts are provided by E230, E266, H269, D294, D305, D307, and D337.

The protein belongs to the xylose isomerase family. As to quaternary structure, homotetramer. It depends on Mg(2+) as a cofactor.

It is found in the cytoplasm. It catalyses the reaction alpha-D-xylose = alpha-D-xylulofuranose. The chain is Xylose isomerase from Enterococcus faecalis (strain ATCC 700802 / V583).